Here is a 537-residue protein sequence, read N- to C-terminus: Leucine-rich repeat LGI family member 4 (537 aa).

The signal sequence occupies residues 1–19; it reads MGGAGILLLLLAGAGVVVA. LRR repeat units lie at residues 53-74, 77-98, 101-122, and 125-146; these read TLLS…SFLR, SLHL…AFAG, HLQY…ALRG, and SLTH…LFRG. Residues 158–208 enclose the LRRCT domain; that stretch reads NPFQCDCRVLWLLQWMPTVNASVGTGACAGPASLSHMQLHHLDPKTFKCRA. N-linked (GlcNAc...) asparagine glycosylation occurs at Asn177. EAR repeat units follow at residues 210-252, 256-298, 302-349, 351-394, 396-439, 441-483, and 487-532; these read ELSW…SWDY, RFRP…ARPS, RLAP…CRDG, GFYP…HWTG, RFER…RWDG, MFRL…RLEP, and LLEP…QHHE.

Can bind to ADAM11, ADAM22 and ADAM23. As to expression, widely expressed, with highest expression in brain.

It is found in the secreted. In terms of biological role, component of Schwann cell signaling pathway(s) that controls axon segregation and myelin formation. This is Leucine-rich repeat LGI family member 4 (LGI4) from Homo sapiens (Human).